We begin with the raw amino-acid sequence, 210 residues long: LexA repressor (210 aa).

The H-T-H motif DNA-binding region spans 29 to 49 (VREIGEAVDLSSTSTVHGHIS). Catalysis depends on for autocatalytic cleavage activity residues Ser130 and Lys168.

Belongs to the peptidase S24 family. As to quaternary structure, homodimer.

It catalyses the reaction Hydrolysis of Ala-|-Gly bond in repressor LexA.. In terms of biological role, represses a number of genes involved in the response to DNA damage (SOS response), including recA and lexA. In the presence of single-stranded DNA, RecA interacts with LexA causing an autocatalytic cleavage which disrupts the DNA-binding part of LexA, leading to derepression of the SOS regulon and eventually DNA repair. This Lactiplantibacillus plantarum (strain ATCC BAA-793 / NCIMB 8826 / WCFS1) (Lactobacillus plantarum) protein is LexA repressor.